We begin with the raw amino-acid sequence, 55 residues long: Metallothionein-3 (55 aa).

It belongs to the metallothionein superfamily. Type 11 family.

The polypeptide is Metallothionein-3 (MTP3) (Yarrowia lipolytica (strain CLIB 122 / E 150) (Yeast)).